A 470-amino-acid polypeptide reads, in one-letter code: tRNA modification GTPase MnmE (470 aa).

Residues Arg24, Glu81, and Lys122 each coordinate (6S)-5-formyl-5,6,7,8-tetrahydrofolate. The 166-residue stretch at 218–383 (GIKIVIAGKP…LQEYLSNNIK (166 aa)) folds into the TrmE-type G domain. A K(+)-binding site is contributed by Asn228. Residues 228-233 (NAGKSS), 247-253 (STISGTT), and 272-275 (DTAG) contribute to the GTP site. A Mg(2+)-binding site is contributed by Ser232. The K(+) site is built by Ser247, Ile249, and Thr252. Thr253 contributes to the Mg(2+) binding site. Residue Lys470 participates in (6S)-5-formyl-5,6,7,8-tetrahydrofolate binding.

This sequence belongs to the TRAFAC class TrmE-Era-EngA-EngB-Septin-like GTPase superfamily. TrmE GTPase family. Homodimer. Heterotetramer of two MnmE and two MnmG subunits. It depends on K(+) as a cofactor.

The protein resides in the cytoplasm. Functionally, exhibits a very high intrinsic GTPase hydrolysis rate. Involved in the addition of a carboxymethylaminomethyl (cmnm) group at the wobble position (U34) of certain tRNAs, forming tRNA-cmnm(5)s(2)U34. This chain is tRNA modification GTPase MnmE, found in Blochmanniella pennsylvanica (strain BPEN).